Consider the following 396-residue polypeptide: Carbamoyl phosphate synthase small chain (396 aa).

Residues 1 to 204 (MTQHDNDPAW…WDKGFGQQDK (204 aa)) are CPSase. L-glutamine is bound by residues serine 59, glycine 256, and glycine 258. Residues 208–396 (NVVAIDYGIK…AELMRQKKSA (189 aa)) enclose the Glutamine amidotransferase type-1 domain. Cysteine 285 (nucleophile) is an active-site residue. Positions 286, 289, 327, 329, and 330 each coordinate L-glutamine. Active-site residues include histidine 369 and glutamate 371.

This sequence belongs to the CarA family. Composed of two chains; the small (or glutamine) chain promotes the hydrolysis of glutamine to ammonia, which is used by the large (or ammonia) chain to synthesize carbamoyl phosphate. Tetramer of heterodimers (alpha,beta)4.

It catalyses the reaction hydrogencarbonate + L-glutamine + 2 ATP + H2O = carbamoyl phosphate + L-glutamate + 2 ADP + phosphate + 2 H(+). The enzyme catalyses L-glutamine + H2O = L-glutamate + NH4(+). It participates in amino-acid biosynthesis; L-arginine biosynthesis; carbamoyl phosphate from bicarbonate: step 1/1. It functions in the pathway pyrimidine metabolism; UMP biosynthesis via de novo pathway; (S)-dihydroorotate from bicarbonate: step 1/3. Small subunit of the glutamine-dependent carbamoyl phosphate synthetase (CPSase). CPSase catalyzes the formation of carbamoyl phosphate from the ammonia moiety of glutamine, carbonate, and phosphate donated by ATP, constituting the first step of 2 biosynthetic pathways, one leading to arginine and/or urea and the other to pyrimidine nucleotides. The small subunit (glutamine amidotransferase) binds and cleaves glutamine to supply the large subunit with the substrate ammonia. This is Carbamoyl phosphate synthase small chain from Bradyrhizobium diazoefficiens (strain JCM 10833 / BCRC 13528 / IAM 13628 / NBRC 14792 / USDA 110).